The sequence spans 548 residues: Tryprostatin B 6-hydroxylase (548 aa).

Helical transmembrane passes span 5–25, 35–54, and 73–93; these read MKCGYLATAGLIGICIHLWYF, WRYVRFHLCLTMGVSALLYA, and LLMVTYLIGLFTSLLLYRTLF. Cysteine 491 serves as a coordination point for heme.

This sequence belongs to the cytochrome P450 family. It depends on heme as a cofactor.

The protein localises to the membrane. The enzyme catalyses tryprostatin B + reduced [NADPH--hemoprotein reductase] + O2 = 6-hydroxytryprostatin B + oxidized [NADPH--hemoprotein reductase] + H2O + H(+). The protein operates within mycotoxin biosynthesis. Cytochrome P450 monooxygenase; part of the gene cluster that mediates the biosynthesis of fumitremorgins, indole alkaloids that carry not only intriguing chemical structures, but also interesting biological and pharmacological activities. The biosynthesis of fumitremorgin-type alkaloids begins by condensation of the two amino acids L-tryptophan and L-proline to brevianamide F, catalyzed by the non-ribosomal peptide synthetase ftmPS/ftmA. Brevianamide F is then prenylated by the prenyltransferase ftmPT1/ftmB in the presence of dimethylallyl diphosphate, resulting in the formation of tryprostatin B. The three cytochrome P450 monooxygenases, ftmP450-1/ftmC, ftmP450-2/ftmE and ftmP450-3/FtmG, are responsible for the conversion of tryprostatin B to 6-hydroxytryprostatin B, tryprostatin A to fumitremorgin C and fumitremorgin C to 12,13-dihydroxyfumitremorgin C, respectively. The putative methyltransferase ftmMT/ftmD is expected for the conversion of 6-hydroxytryprostatin B to tryprostatin A. FtmPT2/FtmH catalyzes the prenylation of 12,13-dihydroxyfumitre-morgin C in the presence of dimethylallyl diphosphate, resulting in the formation of fumitremorgin B. Fumitremorgin B is further converted to verruculogen by ftmOx1/ftmF via the insertion of an endoperoxide bond between the two prenyl moieties. Finally, verruculogen is further converted to fumitremorgin A by the verruculogen prenyltransferase ftmPT3. The polypeptide is Tryprostatin B 6-hydroxylase (Neosartorya fischeri (strain ATCC 1020 / DSM 3700 / CBS 544.65 / FGSC A1164 / JCM 1740 / NRRL 181 / WB 181) (Aspergillus fischerianus)).